The primary structure comprises 385 residues: S-adenosylmethionine synthase (385 aa).

Histidine 16 lines the ATP pocket. Position 18 (aspartate 18) interacts with Mg(2+). Position 44 (glutamate 44) interacts with K(+). Residues glutamate 57 and glutamine 100 each contribute to the L-methionine site. Residues 100 to 110 are flexible loop; the sequence is QSPDINQGVDR. Residues 164–166, 230–231, aspartate 239, 245–246, alanine 262, and lysine 266 contribute to the ATP site; these read DGK, KF, and RK. Aspartate 239 provides a ligand contact to L-methionine. Lysine 270 is a binding site for L-methionine.

The protein belongs to the AdoMet synthase family. Homotetramer; dimer of dimers. The cofactor is Mg(2+). Requires K(+) as cofactor.

Its subcellular location is the cytoplasm. It catalyses the reaction L-methionine + ATP + H2O = S-adenosyl-L-methionine + phosphate + diphosphate. Its pathway is amino-acid biosynthesis; S-adenosyl-L-methionine biosynthesis; S-adenosyl-L-methionine from L-methionine: step 1/1. Its function is as follows. Catalyzes the formation of S-adenosylmethionine (AdoMet) from methionine and ATP. The overall synthetic reaction is composed of two sequential steps, AdoMet formation and the subsequent tripolyphosphate hydrolysis which occurs prior to release of AdoMet from the enzyme. In Helicobacter acinonychis (strain Sheeba), this protein is S-adenosylmethionine synthase.